The sequence spans 662 residues: MNFPWDQLLVKGNWMITMAQIGAPFLVIGLIAVITYFKLWKYLYKEWFTSVDHKKIGIMYLICAVLMFVRGGIDALLIRAQLTVPDNKFLESNHYNEIFSTHGVIMIIFMAMPFIFGLWNIVVPLQIGARDVAFPVLNNVSFWLFFAGMILFNLSFIIGGSPAAGWTNYAPLAGEFSPGPGVNYYLIAIQISGLGTLATGINFFVTILRCKTPTMKFMQMPMFTVTTFITTLIVILAFPPLTVALALMTTDRIFDTAFFTVAHGGMPMLWANFFWVWGHPEVYIVILPAFGIYSEIIPTFARKRLFGHQSMVWATAGIAFLSFLVWVHHFFTMGNGALINSFFSISTMLIGIPTGVKLFNWLLTLYKGRITFESPMLFSLAFIPNFLLGGVTGVMLAMASADYQYHNTYFLVAHFHYTLVTGVVFACLAGLIFWYPKMMGYKLNETLNKWCFWFFMIGFNVCFLPQFILGLDGMPRRLYTYMPSDGWFLLNLISTIGALLMAIGFLFLVVSIVYSHFKSPREATGDNWDGLGRTLEWTTASAIPPKYNFAITPDWNGYDTFVDMKEHGRHYLDNHNYKDIHMPNNTPVGFWIGIFMTIGGFFLIFETVIPALICLFGIFGTMIYRSFQIDHGYHIPAAEVAETEARLREARIKEREAVSHES.

2 helical membrane passes run 14 to 34 (WMITMAQIGAPFLVIGLIAVI) and 58 to 78 (IMYLICAVLMFVRGGIDALLI). His102 is a binding site for Fe(II)-heme a. 8 helical membrane passes run 103–123 (GVIMIIFMAMPFIFGLWNIVV), 140–160 (VSFWLFFAGMILFNLSFIIGG), 187–207 (IAIQISGLGTLATGINFFVTI), 228–248 (FITTLIVILAFPPLTVALALM), 273–293 (FFWVWGHPEVYIVILPAFGIY), 311–331 (MVWATAGIAFLSFLVWVHHFF), 336–356 (GALINSFFSISTMLIGIPTGV), and 376–396 (MLFSLAFIPNFLLGGVTGVML). Cu cation is bound by residues His279, Tyr283, His328, and His329. Positions 279–283 (HPEVY) form a cross-link, 1'-histidyl-3'-tyrosine (His-Tyr). His414 is a heme a3 binding site. Transmembrane regions (helical) follow at residues 415 to 435 (FHYTLVTGVVFACLAGLIFWY), 451 to 471 (CFWFFMIGFNVCFLPQFILGL), 493 to 513 (ISTIGALLMAIGFLFLVVSIV), 587 to 604 (PVGFWIGIFMTIGGFFLI), and 608 to 627 (VIPALICLFGIFGTMIYRSF). A Fe(II)-heme a-binding site is contributed by His416.

It belongs to the heme-copper respiratory oxidase family. Cu cation serves as cofactor. Ferriheme a is required as a cofactor. It depends on Heme A3. as a cofactor.

Its subcellular location is the cell membrane. The catalysed reaction is 2 a quinol + O2 = 2 a quinone + 2 H2O. It functions in the pathway energy metabolism; oxidative phosphorylation. Its function is as follows. Catalyzes quinol oxidation with the concomitant reduction of oxygen to water. The sequence is that of Probable quinol oxidase subunit 1 (qoxB) from Staphylococcus aureus (strain MRSA252).